The sequence spans 194 residues: Clathrin light chain (194 aa).

Positions 44 to 156 are disordered; sequence TTFDNSNNNN…TDSTSGNTTH (113 aa). Over residues 48–65 the composition is skewed to low complexity; sequence NSNNNNNNNNHNNNSYNS. Basic and acidic residues-rich tracts occupy residues 89 to 115 and 124 to 146; these read EYLEKHEKEMQEKKKKSEEKRQKKIAE and YSEREAKKKTALKNNRDHNKSLE. The interval 124–194 is required for binding clathrin heavy chain, localization to punctae, and for cytokinesis and fruiting body development; it reads YSEREAKKKT…LIRLKNQPIV (71 aa). Positions 147–156 are enriched in polar residues; that stretch reads TDSTSGNTTH.

Belongs to the clathrin light chain family. In terms of assembly, clathrin coats are formed from molecules containing 3 heavy chains and 3 light chains.

It is found in the cytoplasmic vesicle membrane. The protein resides in the membrane. It localises to the coated pit. In terms of biological role, clathrin is the major protein of the polyhedral coat of coated pits and vesicles. The sequence is that of Clathrin light chain (clc) from Dictyostelium discoideum (Social amoeba).